The primary structure comprises 86 residues: Exodeoxyribonuclease 7 small subunit (86 aa).

Residues 1–26 form a disordered region; that stretch reads MQDELFETEKAPQKNTKNAKNAPKKS.

This sequence belongs to the XseB family. As to quaternary structure, heterooligomer composed of large and small subunits.

The protein resides in the cytoplasm. The catalysed reaction is Exonucleolytic cleavage in either 5'- to 3'- or 3'- to 5'-direction to yield nucleoside 5'-phosphates.. In terms of biological role, bidirectionally degrades single-stranded DNA into large acid-insoluble oligonucleotides, which are then degraded further into small acid-soluble oligonucleotides. The protein is Exodeoxyribonuclease 7 small subunit of Helicobacter pylori (strain Shi470).